Reading from the N-terminus, the 876-residue chain is Exonuclease mut-7 homolog (876 aa).

The region spanning 517–571 is the 3'-5' exonuclease domain; that stretch reads GLSLLVQQVLGTALDKTQQLSNWDRRPLCEEQVIYAAADAYCLLEVHQALCREPA. 2 disordered regions span residues 578-607 and 751-781; these read DLAGSRRPRHRERPGARKPPGLQKASAPAA and SHQEGPRSSGDEATQSQAVQEPGPAPDAAPE.

The protein belongs to the mut-7 family. It depends on Mg(2+) as a cofactor.

Its function is as follows. Possesses 3'-5' exoribonuclease activity. Required for 3'-end trimming of AGO1-bound miRNAs. This Homo sapiens (Human) protein is Exonuclease mut-7 homolog (EXD3).